The chain runs to 122 residues: Large ribosomal subunit protein uL14c (122 aa).

Belongs to the universal ribosomal protein uL14 family. As to quaternary structure, part of the 50S ribosomal subunit.

It localises to the plastid. The protein resides in the chloroplast. Functionally, binds to 23S rRNA. The chain is Large ribosomal subunit protein uL14c from Angiopteris evecta (Mule's foot fern).